The sequence spans 580 residues: MSGASSGTAIGAHLFGVSPEYRVLIGDGGAGPSKSLSEVSFSVWYRSRAARLVILCLVASFLVPCLTFLIAEAVMGQTVTTPLSLTLDHWSEVRARAHNQGVEVRKKKWITLCEAEWVMMNVGWPREGTFSLDNISQVEKKIFAPGPHGHPDQVPYITTWRSLATDPPSWVRPFLPPPKPPTPLPQPLSPQPSAPLTSSLYPVVPKPDPPKPPVLPPDPSSPLIDLLTEEPPPYPGGHGPPPSGPRTPAASPIASRLRERRENPAEESQALPLREGPNNRPQYWPFSASDLYNWKSHNPPFSQDPVALTNLIESILVTHQPTWDDCQQLLQALLTGEERQRVLLEARKQVPGEDGRPTQLPNVIDETFPLTRPNWDFATPAGREHLRLYRQLLLAGLRGAARRPTNLAQVKQVVQGKEETPAAFLERLKEAYRMYTPYDPEDPGQAASVILSFIYQSSPDIRNKLQRLEGLQGFTLSDLLKEAEKIYNKRETPEEREERLWQRQEERDKKRHKEMTKVLATVVAQNRDKDREENKLGDQRKIPLGKDQCAYCKEKGHWVRDCPKRPRKKPANSTLLNLED.

Residues 1 to 51 (MSGASSGTAIGAHLFGVSPEYRVLIGDGGAGPSKSLSEVSFSVWYRSRAAR) lie on the Cytoplasmic side of the membrane. Residues 52–72 (LVILCLVASFLVPCLTFLIAE) traverse the membrane as a helical segment. Topologically, residues 73 to 580 (AVMGQTVTTP…ANSTLLNLED (508 aa)) are extracellular. N-linked (GlcNAc...) asparagine; by host glycosylation occurs at N134. Disordered stretches follow at residues 171–282 (VRPF…NRPQ), 491–514 (ETPE…RHKE), and 560–580 (RDCP…NLED). Over residues 174-193 (FLPPPKPPTPLPQPLSPQPS) the composition is skewed to pro residues. The segment covering 194–203 (APLTSSLYPV) has biased composition (low complexity). Pro residues-rich tracts occupy residues 204–220 (VPKP…PDPS) and 230–245 (EPPP…PSGP). A compositionally biased stretch (basic and acidic residues) spans 491–508 (ETPEEREERLWQRQEERD). The span at 571-580 (ANSTLLNLED) shows a compositional bias: polar residues. Residue N572 is glycosylated (N-linked (GlcNAc...) asparagine; by host).

In terms of processing, glycosylated by host. Post-translationally, cleaved by host near the middle of the molecule, releasing the c-terminal half containing capsid and nucleoprotein domains op GAG.

Its subcellular location is the host cell membrane. Its function is as follows. Plays a role in viral particle release. Presumably acts by facilitating the fission of the virion bud at the cell surface. This Feline leukemia virus protein is Glyco-Gag protein.